Reading from the N-terminus, the 297-residue chain is SWIRM domain-containing protein laf1 (297 aa).

Disordered regions lie at residues 50 to 70 (PKCSTIPESPKDSIVEPKPTA) and 109 to 173 (STPA…EFSS). Over residues 159–173 (QHNTRFKQSSREFSS) the composition is skewed to polar residues. An SWIRM domain is found at 207 to 297 (LRSEWKGPPL…AFHDEGFFDD (91 aa)).

Component of the RPD3C(L) complex.

The protein resides in the nucleus. Component of the RPD3C(L) histone deacetylase complex (HDAC) responsible for the deacetylation of lysine residues on the N-terminal part of the core histones (H2A, H2B, H3 and H4). Histone deacetylation gives a tag for epigenetic repression and plays an important role in transcriptional regulation, cell cycle progression and developmental events. This chain is SWIRM domain-containing protein laf1 (laf1), found in Schizosaccharomyces pombe (strain 972 / ATCC 24843) (Fission yeast).